A 661-amino-acid chain; its full sequence is L-type lectin-domain containing receptor kinase V.5 (661 aa).

The first 25 residues, 1 to 25, serve as a signal peptide directing secretion; the sequence is MSRELIILCQPILVLFLTLFYNSHG. Residues 26-282 lie on the Extracellular side of the membrane; the sequence is YFVSQGSVGI…KTSNRTKTVL (257 aa). The legume-lectin like stretch occupies residues 30–250; it reads QGSVGIGFNG…GAIHYLMGWL (221 aa). Residues asparagine 45, asparagine 64, asparagine 116, asparagine 198, and asparagine 276 are each glycosylated (N-linked (GlcNAc...) asparagine). A helical membrane pass occupies residues 283–303; the sequence is AVCLTVSVFAAFVASWIGFVF. Over 304–661 the chain is Cytoplasmic; that stretch reads YLRHKKVKEV…TDSSFVSHGR (358 aa). The 259-residue stretch at 338-596 folds into the Protein kinase domain; the sequence is FKEKQLLGKG…LGVLCSHQAA (259 aa). Residues 344–352 and lysine 367 each bind ATP; that span reads LGKGGFGQV. The active-site Proton acceptor is the aspartate 464.

The protein in the C-terminal section; belongs to the protein kinase superfamily. Ser/Thr protein kinase family. This sequence in the N-terminal section; belongs to the leguminous lectin family. Post-translationally, autophosphorylated on a Ser residue. In terms of tissue distribution, expressed at low levels in stems, leaves, flowers and siliques.

The protein localises to the cell membrane. It carries out the reaction L-seryl-[protein] + ATP = O-phospho-L-seryl-[protein] + ADP + H(+). The enzyme catalyses L-threonyl-[protein] + ATP = O-phospho-L-threonyl-[protein] + ADP + H(+). Its function is as follows. Confers resistance to the pathogenic oomycetes Phytophthora infestans and Phytophthora capsici, but confers susceptibility to the pathogenic bacteria Pseudomonas syringae. The polypeptide is L-type lectin-domain containing receptor kinase V.5 (Arabidopsis thaliana (Mouse-ear cress)).